The chain runs to 63 residues: Kappa-theraphotoxin-Cg3a 1 (63 aa).

The first 21 residues, 1 to 21 (MKNTSILFILGLALLLVLAFE), serve as a signal peptide directing secretion. A propeptide spanning residues 22–29 (VQVGESDG) is cleaved from the precursor. Disulfide bonds link C31-C46, C38-C51, and C45-C58.

The protein belongs to the neurotoxin 10 (Hwtx-1) family. 44 (Jztx-4) subfamily. In terms of tissue distribution, expressed by the venom gland.

It is found in the secreted. Functionally, gating modifier of Kv2.1/KCNB1, Kv2.2/KCNB2 and Kv4.3/KCND3 channels. The protein is Kappa-theraphotoxin-Cg3a 1 of Chilobrachys guangxiensis (Chinese earth tiger tarantula).